The sequence spans 591 residues: Aspartate--tRNA(Asp/Asn) ligase (591 aa).

An L-aspartate-binding site is contributed by glutamate 176. The tract at residues 200–203 (QLFK) is aspartate. Position 222 (arginine 222) interacts with L-aspartate. ATP contacts are provided by residues 222–224 (RDE) and glutamine 231. Histidine 450 is a binding site for L-aspartate. Glutamate 484 lines the ATP pocket. Arginine 491 lines the L-aspartate pocket. 536-539 (GLDR) provides a ligand contact to ATP.

It belongs to the class-II aminoacyl-tRNA synthetase family. Type 1 subfamily. As to quaternary structure, homodimer.

The protein resides in the cytoplasm. It catalyses the reaction tRNA(Asx) + L-aspartate + ATP = L-aspartyl-tRNA(Asx) + AMP + diphosphate. Its function is as follows. Aspartyl-tRNA synthetase with relaxed tRNA specificity since it is able to aspartylate not only its cognate tRNA(Asp) but also tRNA(Asn). Reaction proceeds in two steps: L-aspartate is first activated by ATP to form Asp-AMP and then transferred to the acceptor end of tRNA(Asp/Asn). This Bacillus cereus (strain B4264) protein is Aspartate--tRNA(Asp/Asn) ligase.